An 828-amino-acid polypeptide reads, in one-letter code: Leucine--tRNA ligase (828 aa).

The 'HIGH' region motif lies at P36–H46. The 'KMSKS' region motif lies at K595–S599. K598 contributes to the ATP binding site.

This sequence belongs to the class-I aminoacyl-tRNA synthetase family.

The protein localises to the cytoplasm. The enzyme catalyses tRNA(Leu) + L-leucine + ATP = L-leucyl-tRNA(Leu) + AMP + diphosphate. The polypeptide is Leucine--tRNA ligase (Rickettsia typhi (strain ATCC VR-144 / Wilmington)).